We begin with the raw amino-acid sequence, 490 residues long: Polyamine oxidase 2 (490 aa).

FAD is bound by residues Glu-57, Arg-65, Val-246, and Glu-433. The Microbody targeting signal signature appears at 488-490 (SRL).

The protein belongs to the flavin monoamine oxidase family. It depends on FAD as a cofactor. In terms of tissue distribution, highly expressed in flowers and siliques. Also found in leaf and stem and in low levels in cotyledons, roots and in seedlings.

The protein localises to the peroxisome. The enzyme catalyses spermine + O2 + H2O = 3-aminopropanal + spermidine + H2O2. It catalyses the reaction N(1)-acetylspermine + O2 + H2O = 3-acetamidopropanal + spermidine + H2O2. It carries out the reaction spermidine + O2 + H2O = 3-aminopropanal + putrescine + H2O2. Its pathway is amine and polyamine degradation; spermine degradation. It participates in amine and polyamine degradation; spermidine degradation. Its function is as follows. Flavoenzyme involved in polyamine back-conversion. Catalyzes the oxidation of the secondary amino group of polyamines, such as spermine, spermidine and their acetyl derivatives. Substrate preference is N(1)-acetylspermine &gt; spermine &gt; spermidine. Plays an important role in the regulation of polyamine intracellular concentration. Involved in abscisic acid-mediated developmental processes. May contribute to nitric oxide-mediated effects on root growth. This chain is Polyamine oxidase 2, found in Arabidopsis thaliana (Mouse-ear cress).